Reading from the N-terminus, the 497-residue chain is Sestrin homolog (497 aa).

A phosphoserine mark is found at Ser-185 and Ser-190. Residues 226–241 are compositionally biased toward polar residues; that stretch reads NANPDYDSQTAASSNG. Residues 226–255 form a disordered region; sequence NANPDYDSQTAASSNGGAPPDSANAVADGP.

This sequence belongs to the sestrin family. As to quaternary structure, associates with the GATOR2 complex; the interaction is probably direct. Associates with the GATOR1 complex; the interaction is probably indirect and mediated by the GATOR2 complex. In terms of tissue distribution, highly expressed in muscle-enriched tissues (at protein level).

It is found in the nucleus. Its subcellular location is the cytoplasm. Functionally, functions as a negative feedback regulator of mTOR function. This chain is Sestrin homolog, found in Drosophila melanogaster (Fruit fly).